A 265-amino-acid chain; its full sequence is Deoxycytidine kinase 1 (265 aa).

30-38 (GNIAAGKST) contacts ATP. Residues E55, Y88, and Q99 each contribute to the substrate site. E129 (proton acceptor) is an active-site residue. Substrate contacts are provided by R130 and D135. An ATP-binding site is contributed by 190 to 194 (RVYTR). Residue E199 coordinates substrate. An ATP-binding site is contributed by 242–244 (EDF).

Belongs to the DCK/DGK family. In terms of assembly, homodimer.

It is found in the nucleus. The catalysed reaction is 2'-deoxycytidine + a ribonucleoside 5'-triphosphate = dCMP + a ribonucleoside 5'-diphosphate + H(+). It carries out the reaction 2'-deoxyguanosine + ATP = dGMP + ADP + H(+). The enzyme catalyses 2'-deoxyadenosine + ATP = dAMP + ADP + H(+). Functionally, phosphorylates the deoxyribonucleosides deoxyadenosine, deoxycytidine and deoxyguanosine with highest activity against deoxycytidine followed by deadenosine and deoxyguanosine. Shows only very minor activity against deoxyuridine and deoxythymidine. The chain is Deoxycytidine kinase 1 from Xenopus laevis (African clawed frog).